A 76-amino-acid chain; its full sequence is EMBRYO SURROUNDING FACTOR 1-like protein 8 (76 aa).

An N-terminal signal peptide occupies residues 1 to 22 (MSSSQFFILCIILISSFPLHEC). Intrachain disulfides connect C38–C54, C43–C74, C52–C70, and C55–C63.

This sequence belongs to the MEG family. Expressed in flowers.

This chain is EMBRYO SURROUNDING FACTOR 1-like protein 8 (ESFL8), found in Arabidopsis thaliana (Mouse-ear cress).